The following is a 321-amino-acid chain: GTP 3',8-cyclase (321 aa).

The 229-residue stretch at 5–233 (SFNRVIDYIR…QGSSKIYTLE (229 aa)) folds into the Radical SAM core domain. Arg-14 provides a ligand contact to GTP. Positions 21 and 25 each coordinate [4Fe-4S] cluster. Position 27 (Tyr-27) interacts with S-adenosyl-L-methionine. Residue Cys-28 participates in [4Fe-4S] cluster binding. Residue Arg-64 participates in GTP binding. Residue Gly-68 participates in S-adenosyl-L-methionine binding. Position 95 (Ser-95) interacts with GTP. Ser-119 contributes to the S-adenosyl-L-methionine binding site. Lys-155 is a GTP binding site. Met-189 contributes to the S-adenosyl-L-methionine binding site. [4Fe-4S] cluster-binding residues include Cys-249 and Cys-252. Position 254–256 (254–256 (RIR)) interacts with GTP. [4Fe-4S] cluster is bound at residue Cys-266.

Belongs to the radical SAM superfamily. MoaA family. In terms of assembly, monomer and homodimer. [4Fe-4S] cluster is required as a cofactor.

The catalysed reaction is GTP + AH2 + S-adenosyl-L-methionine = (8S)-3',8-cyclo-7,8-dihydroguanosine 5'-triphosphate + 5'-deoxyadenosine + L-methionine + A + H(+). It participates in cofactor biosynthesis; molybdopterin biosynthesis. Catalyzes the cyclization of GTP to (8S)-3',8-cyclo-7,8-dihydroguanosine 5'-triphosphate. The chain is GTP 3',8-cyclase from Helicobacter pylori (strain J99 / ATCC 700824) (Campylobacter pylori J99).